The sequence spans 402 residues: Multidrug resistance protein MdtH (402 aa).

Residues 1–12 (MSRVSQARNLGK) lie on the Cytoplasmic side of the membrane. Residues 13 to 33 (YFLLIDNMLVVLGFFVVFPLI) traverse the membrane as a helical segment. Topologically, residues 34–98 (SIRFVDQMGW…GFATMGIAHE (65 aa)) are periplasmic. Residues 99-116 (PWLLWFSCLLSGLGGTLF) form a helical membrane-spanning segment. Over 117 to 138 (DPPRSALVVKLIRPQQRGRFFS) the chain is Cytoplasmic. The chain crosses the membrane as a helical span at residues 139 to 159 (LLMMQDSAGAVIGALLGSWLL). Residues 160 to 164 (QYDFR) are Periplasmic-facing. Residues 165 to 185 (LVCATGAVLFVLCAAFNAWLL) traverse the membrane as a helical segment. At 186–213 (PAWKLSTVRTPVREGMTRVMRDKRFVTY) the chain is on the cytoplasmic side. The helical transmembrane segment at 214–234 (VLTLAGYYMLAVQVMLMLPIM) threads the bilayer. Residues 235 to 243 (VNDVAGAPS) lie on the Periplasmic side of the membrane. Residues 244–264 (AVKWMYAIEACLSLTLLYPIA) traverse the membrane as a helical segment. Topologically, residues 265–276 (RWSEKHFRLEHR) are cytoplasmic. Residues 277–297 (LMAGLLIMSLSMMPVGMVSGL) traverse the membrane as a helical segment. The Periplasmic portion of the chain corresponds to 298–299 (QQ). The chain crosses the membrane as a helical span at residues 300-320 (LFTLICLFYIGSIIAEPARET). Over 321-339 (LSASLADARARGSYMGFSR) the chain is Cytoplasmic. The helical transmembrane segment at 340 to 360 (LGLAIGGAIGYIGGGWLFDLG) threads the bilayer. At 361–367 (KSAHQPE) the chain is on the periplasmic side. A helical transmembrane segment spans residues 368–388 (LPWMMLGIIGIFTFLALGWQF). The Cytoplasmic segment spans residues 389-402 (SQKRAARRLLERDA).

It belongs to the major facilitator superfamily. DHA1 family. MdtH (TC 2.A.1.2.21) subfamily.

It is found in the cell inner membrane. In terms of biological role, confers resistance to norfloxacin and enoxacin. The polypeptide is Multidrug resistance protein MdtH (Escherichia coli O139:H28 (strain E24377A / ETEC)).